The primary structure comprises 142 residues: Hemoglobin subunit alpha (142 aa).

In terms of domain architecture, Globin spans 1-142 (GLTAADKTLI…VEKALFETYR (142 aa)). H59 is a binding site for O2. Residue H88 participates in heme b binding.

Belongs to the globin family. Heterotetramer of two alpha chains and two beta chains (an easy dimerization is also reported). As to expression, red blood cells.

Functionally, involved in oxygen transport from the lung to the various peripheral tissues. In Latimeria chalumnae (Coelacanth), this protein is Hemoglobin subunit alpha (HBA).